The primary structure comprises 213 residues: MAKNYYDITLALAGICQSARLVQQLAHQGHCDADALHVSLNSIIDMNPSSTLAVFGGSEANLRVGLETLLGVLNASSCQGLNAELTRYTLSLMVLERKLSSAKGALDTLGNRINGLQRQLEHFDLQSETLMSAMAAIYVDVISPLGPRIQVTGSPAVLQSPQVQAKVRATLLAGIRAAVLWHQVGGGRLQLMFSRNRLTTQAKQILAHLTPEL.

Positions 79-126 (QGLNAELTRYTLSLMVLERKLSSAKGALDTLGNRINGLQRQLEHFDLQ) form a coiled coil.

This sequence belongs to the HflD family.

The protein resides in the cytoplasm. It is found in the cell inner membrane. The protein is High frequency lysogenization protein HflD homolog of Shigella flexneri serotype 5b (strain 8401).